Consider the following 1894-residue polypeptide: Plexin-A1 (1894 aa).

The signal sequence occupies residues 1–27; the sequence is MPLPPLSSRTLLLLLLLLLRGVWIAIS. The Sema domain maps to 28–510; sequence SPPAGLGPQP…TEKQVTQVPV (483 aa). Residues 28–1242 are Extracellular-facing; sequence SPPAGLGPQP…VYSDSLLTLP (1215 aa). Residue Asn75 is glycosylated (N-linked (GlcNAc...) asparagine). 10 cysteine pairs are disulfide-bonded: Cys93/Cys102, Cys128/Cys136, Cys284/Cys405, Cys300/Cys356, Cys374/Cys393, Cys513/Cys530, Cys519/Cys561, Cys522/Cys539, Cys533/Cys545, and Cys596/Cys615. Asn658, Asn670, and Asn699 each carry an N-linked (GlcNAc...) asparagine glycan. IPT/TIG domains follow at residues 862–957, 959–1043, 1046–1145, and 1148–1234; these read PKIL…FTFV, PTFY…YNYT, PTIL…FLYY, and PVLE…LQVY. Asn1041 carries N-linked (GlcNAc...) asparagine glycosylation. N-linked (GlcNAc...) asparagine glycans are attached at residues Asn1185 and Asn1210. The chain crosses the membrane as a helical span at residues 1243-1263; that stretch reads AIVGIGGGGGLLLLVIVAVLI. The stretch at 1262-1315 forms a coiled coil; the sequence is LIAYKRKSRDADRTLKRLQLQMDNLESRVALECKEAFAELQTDIHELTSDLDGA. Topologically, residues 1264–1894 are cytoplasmic; sequence AYKRKSRDAD…QVVDTMALSS (631 aa).

It belongs to the plexin family. In terms of assembly, interacts directly with NRP1 and NRP2. Interacts with PLXN1B. Interacts with FARP2, RND1 and KDR/VEGFR2. Binding of SEMA3A leads to dissociation of FARP2. Interacts with CRMP1, DPYSL2/CRMP2, DPYSL3/CRMP3 and DPYSL4/CRMP4. Interacts (via TIG domains) with TREM2; the interaction mediates SEMA6D binding and signaling through TYROBP. Ubiquitous.

It localises to the cell membrane. In terms of biological role, coreceptor for SEMA3A, SEMA3C, SEMA3F and SEMA6D. Necessary for signaling by class 3 semaphorins and subsequent remodeling of the cytoskeleton. Plays a role in axon guidance, invasive growth and cell migration. Class 3 semaphorins bind to a complex composed of a neuropilin and a plexin. The plexin modulates the affinity of the complex for specific semaphorins, and its cytoplasmic domain is required for the activation of down-stream signaling events in the cytoplasm. Acts as coreceptor of TREM2 for SEMA6D in dendritic cells and is involved in the generation of immune responses and skeletal homeostasis. In Mus musculus (Mouse), this protein is Plexin-A1 (Plxna1).